The chain runs to 116 residues: Ribonuclease P protein component 2 (116 aa).

It belongs to the eukaryotic/archaeal RNase P protein component 2 family. Consists of a catalytic RNA component and at least 4-5 protein subunits.

The protein resides in the cytoplasm. The catalysed reaction is Endonucleolytic cleavage of RNA, removing 5'-extranucleotides from tRNA precursor.. Functionally, part of ribonuclease P, a protein complex that generates mature tRNA molecules by cleaving their 5'-ends. In Methanosarcina mazei (strain ATCC BAA-159 / DSM 3647 / Goe1 / Go1 / JCM 11833 / OCM 88) (Methanosarcina frisia), this protein is Ribonuclease P protein component 2.